A 454-amino-acid chain; its full sequence is Protein phosphatase methylesterase 1 (454 aa).

Disordered stretches follow at residues methionine 1 to valine 69 and threonine 181 to proline 203. Low complexity predominate over residues alanine 44 to valine 69. Residues serine 240, aspartate 266, and histidine 412 contribute to the active site.

Belongs to the AB hydrolase superfamily.

The enzyme catalyses [phosphatase 2A protein]-C-terminal L-leucine methyl ester + H2O = [phosphatase 2A protein]-C-terminal L-leucine + methanol + H(+). Demethylates proteins that have been reversibly carboxymethylated. Demethylates the phosphatase PP2A catalytic subunit. In Neurospora crassa (strain ATCC 24698 / 74-OR23-1A / CBS 708.71 / DSM 1257 / FGSC 987), this protein is Protein phosphatase methylesterase 1 (pme-1).